A 294-amino-acid polypeptide reads, in one-letter code: NAD kinase (294 aa).

Aspartate 74 acts as the Proton acceptor in catalysis. NAD(+)-binding positions include 74 to 75, 148 to 149, histidine 159, arginine 176, aspartate 178, and 189 to 194; these read DG, NE, and TAYSLS.

Belongs to the NAD kinase family. Requires a divalent metal cation as cofactor.

The protein localises to the cytoplasm. It catalyses the reaction NAD(+) + ATP = ADP + NADP(+) + H(+). In terms of biological role, involved in the regulation of the intracellular balance of NAD and NADP, and is a key enzyme in the biosynthesis of NADP. Catalyzes specifically the phosphorylation on 2'-hydroxyl of the adenosine moiety of NAD to yield NADP. The polypeptide is NAD kinase (Pseudoalteromonas translucida (strain TAC 125)).